The primary structure comprises 1952 residues: Protein ROS1A (1952 aa).

4 disordered regions span residues 72–157 (EVVG…CRSE), 693–778 (IIRP…ESTS), 1302–1334 (HGTS…DDNV), and 1367–1398 (LIEN…AGKK). 2 stretches are compositionally biased toward basic residues: residues 90-102 (PARK…HRPK) and 130-139 (GKRKYVRKKT). 2 stretches are compositionally biased toward basic and acidic residues: residues 709-720 (PRTDNHQVKVSE) and 727-747 (LPEK…EKPK). The span at 769 to 778 (TNPLQNESTS) shows a compositional bias: polar residues. Residues 1388 to 1398 (AKRPRVGAGKK) are compositionally biased toward basic residues. [4Fe-4S] cluster contacts are provided by Cys1582, Cys1589, Cys1592, and Cys1598.

It belongs to the DNA glycosylase family. DEMETER subfamily. Requires [4Fe-4S] cluster as cofactor. Expressed in roots, leaf blades, leaf sheaths, apical and lateral shoot meristems, inflorescence meristems, lodicules, pollen grains, ovules and seeds. Expressed in vascular tissues of roots and leaves, pollen grains, pericarp, aleurone, and starchy endosperm.

The protein localises to the nucleus. In terms of biological role, bifunctional DNA glycosylase/lyase, which excises 5-methylcytosine (5-meC) and 5-hydroxymethylcytosine (5-hmeC), leaving an apyrimidinic (AP) site that is subsequently incised by the lyase activity. DNA demethylase that is indispensable in both male and female gametophyte development. Involved in the regulation of DNA methylation in the promoters of RISBZ1/BZIP58 and DOF3/RPBF, two transcription factors that functions synergistically to positively regulate genes that are key players in the development of aleurone layers. Active DNA demethylation carried out by ROS1A in rice endosperms may restrict the number of aleurone cell layers. This Oryza sativa subsp. japonica (Rice) protein is Protein ROS1A.